A 291-amino-acid chain; its full sequence is Nucleotide-binding protein RALTA_A0325 (291 aa).

8 to 15 provides a ligand contact to ATP; the sequence is GISGSGKS. 57–60 contacts GTP; it reads DIRS.

The protein belongs to the RapZ-like family.

Displays ATPase and GTPase activities. The sequence is that of Nucleotide-binding protein RALTA_A0325 from Cupriavidus taiwanensis (strain DSM 17343 / BCRC 17206 / CCUG 44338 / CIP 107171 / LMG 19424 / R1) (Ralstonia taiwanensis (strain LMG 19424)).